We begin with the raw amino-acid sequence, 291 residues long: Potassium-transporting ATPase subunit beta (291 aa).

The Cytoplasmic portion of the chain corresponds to 1–36 (MAALQEKKTCGQRMEEFQRYCWNPDTGQMLGRTLSR). A helical; Signal-anchor for type II membrane protein membrane pass occupies residues 37–57 (WVWISLYYVAFYVVMTGLFAL). Residues 58-291 (CLYVLMQTVD…KVEFKLKIEK (234 aa)) lie on the Extracellular side of the membrane. N-linked (GlcNAc...) asparagine glycans are attached at residues Asn99, Asn103, Asn130, Asn146, and Asn161. The cysteines at positions 131 and 152 are disulfide-linked. A disulfide bridge connects residues Cys162 and Cys178. 2 N-linked (GlcNAc...) asparagine glycosylation sites follow: Asn193 and Asn222. The immunoglobulin-like stretch occupies residues 194-291 (GSAPRVDCAF…KVEFKLKIEK (98 aa)). A disulfide bridge connects residues Cys201 and Cys263.

Belongs to the X(+)/potassium ATPases subunit beta family. In terms of assembly, the ATPase pump is composed of two subunits: alpha (catalytic) and beta (regulatory). Interacts with alpha subunit ATP12A; this interaction is required for the formation of a functionally active pump and targeting at the plasma membrane. Interacts (via N-terminus) with alpha subunit ATP4A (via the P-domain). Post-translationally, N-glycosylation is necessary for assembly and functional expression of the pump at the plasma membrane.

It localises to the apical cell membrane. The protein resides in the cell membrane. The beta subunit of the gastric H(+)/K(+) ATPase pump which transports H(+) ions in exchange for K(+) ions across the apical membrane of parietal cells. Plays a structural and regulatory role in the assembly and membrane targeting of a functionally active pump. Within a transport cycle, the transfer of a H(+) ion across the membrane is coupled to ATP hydrolysis and is associated with a transient phosphorylation of the alpha subunit that shifts the pump conformation from inward-facing (E1) to outward-facing state (E2). Interacts with the phosphorylation domain of the alpha subunit and functions as a ratchet, stabilizing the lumenal-open E2 conformation and preventing the reverse reaction of the transport cycle. This chain is Potassium-transporting ATPase subunit beta, found in Homo sapiens (Human).